Here is a 986-residue protein sequence, read N- to C-terminus: Epidermin biosynthesis protein EpiB (986 aa).

The protein to B.subtilis SpaB and L.lactis NisB.

The protein localises to the cell membrane. Functionally, involved in the post-translational modification of the lantibiotic epidermin. This Staphylococcus epidermidis protein is Epidermin biosynthesis protein EpiB (epiB).